The sequence spans 233 residues: Bcl-2-like protein 1 (233 aa).

The BH4 motif lies at 4 to 24; it reads SNRELVVDFLSYKLSQKGYSW. The tract at residues 28-71 is disordered; the sequence is SDVEENRTEAPEGTESEMETPSAINGNPSWHLADSPAVNGATGH. Serine 49 bears the Phosphoserine; by PLK3 mark. Serine 62 bears the Phosphoserine; by CDK1 mark. The short motif at 86 to 100 is the BH3 element; that stretch reads VKQALREAGDEFELR. Residues 129 to 148 carry the BH1 motif; that stretch reads ELFRDGVNWGRIVAFFSFGG. The BH2 signature appears at 180 to 195; that stretch reads PWIQENGGWDTFVELY. The helical transmembrane segment at 210–226 threads the bilayer; it reads FNRWFLTGMTVAGVVLL.

Belongs to the Bcl-2 family. In terms of assembly, homodimer. Interacts with BCL2L11. Interacts with BAD. Interacts with PGAM5. Interacts with HEBP2. Interacts with p53/TP53 and BBC3; interaction with BBC3 disrupts the interaction with p53/TP53. Interacts with ATP5F1A and ATP5F1B; the interactions mediate the association of isoform Bcl-X(L) with the mitochondrial membrane ATP synthase F(1)F(0) ATP synthase. Interacts with VDAC1. Interacts with BCL2L11 (via BH3). Interacts with RNF183. Interacts with GIMAP3/IAN4 and GIMAP5/IAN5. Interacts with GIMAP5 and HSPA8/HSC70; the interaction between HSPA8 and BCL2L1 is impaired in the absence of GIMAP5. Interacts with isoform 4 of CLU; this interaction releases and activates BAX and promotes cell death. As to quaternary structure, forms heterodimers with BAX, BAK or BCL2; heterodimerization with BAX does not seem to be required for anti-apoptotic activity. Interacts with isoform 1 of SIVA1; the interaction inhibits the anti-apoptotic activity. Interacts with IKZF3. Interacts with RTL10/BOP. Interacts with DNM1L and CLTA; DNM1L and BCL2L1 isoform BCL-X(L) may form a complex in synaptic vesicles that also contains clathrin and MFF. Interacts (via the loop between motifs BH4 and BH3) with NLRP1 (via LRR repeats), but not with NLRP2, NLRP3, NLRP4, PYCARD, nor MEFV. Interacts with BECN1. Proteolytically cleaved by caspases during apoptosis. The cleaved protein, lacking the BH4 motif, has pro-apoptotic activity. In terms of processing, phosphorylated on Ser-62 by CDK1. This phosphorylation is partial in normal mitotic cells, but complete in G2-arrested cells upon DNA-damage, thus promoting subsequent apoptosis probably by triggering caspases-mediated proteolysis. Phosphorylated by PLK3, leading to regulate the G2 checkpoint and progression to cytokinesis during mitosis. Phosphorylation at Ser-49 appears during the S phase and G2, disappears rapidly in early mitosis during prometaphase, metaphase and early anaphase, and re-appears during telophase and cytokinesis. Post-translationally, ubiquitinated by RNF183 during prolonged ER stress, leading to degradation by the proteosome. Bcl-X(S) is expressed at high levels in cells that undergo a high rate of turnover, such as developing lymphocytes. In contrast, Bcl-X(L) is found in tissues containing long-lived postmitotic cells, such as adult brain.

Its subcellular location is the mitochondrion inner membrane. It is found in the mitochondrion outer membrane. It localises to the mitochondrion matrix. The protein localises to the cytoplasmic vesicle. The protein resides in the secretory vesicle. Its subcellular location is the synaptic vesicle membrane. It is found in the cytoplasm. It localises to the cytosol. The protein localises to the cytoskeleton. The protein resides in the microtubule organizing center. Its subcellular location is the centrosome. It is found in the nucleus membrane. Functionally, potent inhibitor of cell death. Inhibits activation of caspases. Appears to regulate cell death by blocking the voltage-dependent anion channel (VDAC) by binding to it and preventing the release of the caspase activator, CYC1, from the mitochondrial membrane. Also acts as a regulator of G2 checkpoint and progression to cytokinesis during mitosis. Its function is as follows. Isoform Bcl-X(L) also regulates presynaptic plasticity, including neurotransmitter release and recovery, number of axonal mitochondria as well as size and number of synaptic vesicle clusters. During synaptic stimulation, increases ATP availability from mitochondria through regulation of mitochondrial membrane ATP synthase F(1)F(0) activity and regulates endocytic vesicle retrieval in hippocampal neurons through association with DMN1L and stimulation of its GTPase activity in synaptic vesicles. May attenuate inflammation impairing NLRP1-inflammasome activation, hence CASP1 activation and IL1B release. In terms of biological role, isoform Bcl-X(S) promotes apoptosis. In Homo sapiens (Human), this protein is Bcl-2-like protein 1 (BCL2L1).